We begin with the raw amino-acid sequence, 136 residues long: Histone H3.3C (136 aa).

The segment at Met1 to Pro44 is disordered. At Arg3 the chain carries Asymmetric dimethylarginine; by PRMT6; alternate. Arg3 is modified (citrulline; alternate). At Thr4 the chain carries Phosphothreonine; by HASPIN. Position 5 is an allysine; alternate (Lys5). N6,N6,N6-trimethyllysine; alternate is present on Lys5. Lys5 carries the N6,N6-dimethyllysine; alternate modification. At Lys5 the chain carries N6-(2-hydroxyisobutyryl)lysine; alternate. Lys5 is modified (N6-(beta-hydroxybutyryl)lysine; alternate). An N6-acetyllysine; alternate modification is found at Lys5. Residue Lys5 is modified to N6-methyllysine; alternate. Residue Gln6 is modified to 5-glutamyl dopamine; alternate. Position 6 is a 5-glutamyl serotonin; alternate (Gln6). A Phosphothreonine; by PKC modification is found at Thr7. Symmetric dimethylarginine is present on Arg9. Lys10 bears the N6,N6,N6-trimethyllysine; alternate mark. The residue at position 10 (Lys10) is an N6,N6-dimethyllysine; alternate. An N6-(2-hydroxyisobutyryl)lysine; alternate modification is found at Lys10. At Lys10 the chain carries N6-(beta-hydroxybutyryl)lysine; alternate. N6-acetyllysine; alternate is present on Lys10. Lys10 carries the N6-methyllysine; alternate modification. Lys10 carries the N6-lactoyllysine; alternate modification. Ser11 is modified (ADP-ribosylserine; alternate). Ser11 is modified (phosphoserine; alternate; by AURKB, AURKC, RPS6KA3, RPS6KA4 and RPS6KA5). At Thr12 the chain carries Phosphothreonine; by PKC. Lys15 carries the post-translational modification N6-(2-hydroxyisobutyryl)lysine; alternate. Residue Lys15 is modified to N6-(beta-hydroxybutyryl)lysine; alternate. Lys15 is subject to N6-acetyllysine; alternate. Lys15 carries the N6-lactoyllysine; alternate modification. Lys15 carries the N6-glutaryllysine; alternate modification. Lys15 carries the N6-succinyllysine; alternate modification. Arg18 is modified (asymmetric dimethylarginine). Residues Lys19 and Lys24 each carry the N6-(2-hydroxyisobutyryl)lysine; alternate modification. N6-(beta-hydroxybutyryl)lysine; alternate occurs at positions 19 and 24. Residues Lys19 and Lys24 each carry the N6-acetyllysine; alternate modification. N6-methyllysine; alternate is present on residues Lys19 and Lys24. An N6-lactoyllysine; alternate mark is found at Lys19 and Lys24. An N6-glutaryllysine; alternate mark is found at Lys19 and Lys24. N6-butyryllysine; alternate is present on residues Lys19 and Lys24. Position 27 is a citrulline (Arg27). Lys28 bears the N6,N6,N6-trimethyllysine; alternate mark. Lys28 is modified (N6,N6-dimethyllysine; alternate). Lys28 bears the N6-(2-hydroxyisobutyryl)lysine; alternate mark. Lys28 is subject to N6-acetyllysine; alternate. An N6-methyllysine; alternate modification is found at Lys28. An N6-lactoyllysine; alternate modification is found at Lys28. Lys28 carries the post-translational modification N6-glutaryllysine; alternate. Residue Ser29 is modified to ADP-ribosylserine; alternate. Ser29 bears the Phosphoserine; alternate; by AURKB, AURKC and RPS6KA5 mark. Ser32 is subject to Phosphoserine. An N6,N6,N6-trimethyllysine; alternate modification is found at Lys37. Residue Lys37 is modified to N6,N6-dimethyllysine; alternate. Lys37 carries the N6-(2-hydroxyisobutyryl)lysine; alternate modification. An N6-acetyllysine; alternate modification is found at Lys37. Lys37 is subject to N6-methyllysine; alternate. The residue at position 38 (Lys38) is an N6-methyllysine. The residue at position 42 (Tyr42) is a Phosphotyrosine. Lys57 bears the N6,N6,N6-trimethyllysine; alternate mark. Position 57 is an N6-(2-hydroxyisobutyryl)lysine; alternate (Lys57). Lys57 carries the post-translational modification N6-(beta-hydroxybutyryl)lysine; alternate. Lys57 carries the post-translational modification N6-acetyllysine; alternate. Lys57 carries the post-translational modification N6-methyllysine; alternate. The residue at position 57 (Lys57) is an N6-lactoyllysine; alternate. The residue at position 57 (Lys57) is an N6-glutaryllysine; alternate. Lys57 carries the N6-succinyllysine; alternate modification. Residue Ser58 is modified to Phosphoserine. 2 positions are modified to N6-(2-hydroxyisobutyryl)lysine; alternate: Lys65 and Lys80. N6-methyllysine; alternate is present on residues Lys65 and Lys80. Lys80 is subject to N6,N6,N6-trimethyllysine; alternate. Lys80 carries the N6,N6-dimethyllysine; alternate modification. Lys80 carries the post-translational modification N6-acetyllysine; alternate. At Lys80 the chain carries N6-lactoyllysine; alternate. Lys80 carries the post-translational modification N6-glutaryllysine; alternate. N6-succinyllysine; alternate is present on Lys80. Thr81 carries the post-translational modification Phosphothreonine. Ser87 bears the Phosphoserine mark. Thr108 bears the Phosphothreonine mark. N6-acetyllysine; alternate is present on Lys116. Residue Lys116 is modified to N6-glutaryllysine; alternate.

The protein belongs to the histone H3 family. The nucleosome is a histone octamer containing two molecules each of H2A, H2B, H3 and H4 assembled in one H3-H4 heterotetramer and two H2A-H2B heterodimers. The octamer wraps approximately 147 bp of DNA. Post-translationally, acetylation is generally linked to gene activation. Acetylation on Lys-19 (H3K18ac) favors methylation at Arg-18 (H3R17me). In terms of processing, citrullination at Arg-18 by PADI4 impairs methylation and represses transcription. Asymmetric dimethylation at Arg-18 (H3R17me2a) by CARM1 is linked to gene activation. Asymmetric dimethylation at Arg-3 (H3R2me2a) by PRMT6 is linked to gene repression and is mutually exclusive with H3 Lys-5 methylation (H3K4me2 and H3K4me3). H3R2me2a is present at the 3' of genes regardless of their transcription state and is enriched on inactive promoters, while it is absent on active promoters. Post-translationally, methylation at Lys-5 (H3K4me) and Lys-80 (H3K79me) are linked to gene activation. Methylation at Lys-5 (H3K4me) facilitates subsequent acetylation of H3 and H4. Methylation at Lys-80 (H3K79me) is associated with DNA double-strand break (DSB) responses and is a specific target for TP53BP1. Methylation at Lys-10 (H3K9me) and Lys-28 (H3K27me) are linked to gene repression. Methylation at Lys-10 (H3K9me) is a specific target for HP1 proteins (CBX1, CBX3 and CBX5) and prevents subsequent phosphorylation at Ser-11 (H3S10ph) and acetylation of H3 and H4. Methylation at Lys-5 (H3K4me) and Lys-80 (H3K79me) require preliminary monoubiquitination of H2B at 'Lys-120'. Methylation at Lys-10 (H3K9me) and Lys-28 (H3K27me) are enriched in inactive X chromosome chromatin. Monomethylation at Lys-57 (H3K56me1) by EHMT2/G9A in G1 phase promotes interaction with PCNA and is required for DNA replication. In terms of processing, phosphorylated at Thr-4 (H3T3ph) by HASPIN during prophase and dephosphorylated during anaphase. Phosphorylation at Ser-11 (H3S10ph) by AURKB is crucial for chromosome condensation and cell-cycle progression during mitosis and meiosis. In addition phosphorylation at Ser-11 (H3S10ph) by RPS6KA4 and RPS6KA5 is important during interphase because it enables the transcription of genes following external stimulation, like mitogens, stress, growth factors or UV irradiation and result in the activation of genes, such as c-fos and c-jun. Phosphorylation at Ser-11 (H3S10ph), which is linked to gene activation, prevents methylation at Lys-10 (H3K9me) but facilitates acetylation of H3 and H4. Phosphorylation at Ser-11 (H3S10ph) by AURKB mediates the dissociation of HP1 proteins (CBX1, CBX3 and CBX5) from heterochromatin. Phosphorylation at Ser-11 (H3S10ph) is also an essential regulatory mechanism for neoplastic cell transformation. Phosphorylated at Ser-29 (H3S28ph) by MAP3K20 isoform 1, RPS6KA5 or AURKB during mitosis or upon ultraviolet B irradiation. Phosphorylation at Thr-7 (H3T6ph) by PRKCB is a specific tag for epigenetic transcriptional activation that prevents demethylation of Lys-5 (H3K4me) by LSD1/KDM1A. At centromeres, specifically phosphorylated at Thr-12 (H3T11ph) from prophase to early anaphase, by DAPK3 and PKN1. Phosphorylation at Thr-12 (H3T11ph) by PKN1 or isoform M2 of PKM (PKM2) is a specific tag for epigenetic transcriptional activation that promotes demethylation of Lys-10 (H3K9me) by KDM4C/JMJD2C. Phosphorylation at Tyr-42 (H3Y41ph) by JAK2 promotes exclusion of CBX5 (HP1 alpha) from chromatin. Lysine deamination at Lys-5 (H3K4all) to form allysine is mediated by LOXL2. Allysine formation by LOXL2 only takes place on H3K4me3 and results in gene repression. Post-translationally, butyrylation of histones marks active promoters and competes with histone acetylation. It is present during late spermatogenesis. In terms of processing, succinylation at Lys-80 (H3K79succ) by KAT2A takes place with a maximum frequency around the transcription start sites of genes. It gives a specific tag for epigenetic transcription activation. Serine ADP-ribosylation constitutes the primary form of ADP-ribosylation of proteins in response to DNA damage. Serine ADP-ribosylation at Ser-11 (H3S10ADPr) is mutually exclusive with phosphorylation at Ser-11 (H3S10ph) and impairs acetylation at Lys-10 (H3K9ac).

Its subcellular location is the nucleus. It is found in the chromosome. Its function is as follows. Core component of nucleosome. Nucleosomes wrap and compact DNA into chromatin, limiting DNA accessibility to the cellular machineries which require DNA as a template. Histones thereby play a central role in transcription regulation, DNA repair, DNA replication and chromosomal stability. DNA accessibility is regulated via a complex set of post-translational modifications of histones, also called histone code, and nucleosome remodeling. In Bos taurus (Bovine), this protein is Histone H3.3C.